A 1066-amino-acid polypeptide reads, in one-letter code: Coiled-coil domain-containing protein 73 (1066 aa).

Coiled-coil stretches lie at residues 47–134 (KAET…QVSQ) and 178–391 (LVRE…KTEE). 5 disordered regions span residues 568–600 (LDTR…SNPF), 719–811 (SENS…PKSG), 854–883 (LSPA…PEKT), 944–978 (KNIE…EERN), and 1003–1027 (VQQS…PGNN). Composition is skewed to polar residues over residues 591–600 (NTDGSESNPF), 742–781 (RTNT…TSQA), 789–811 (PLTT…PKSG), 857–869 (ATPS…TSAR), and 948–964 (SDPT…SNWS). A compositionally biased stretch (basic and acidic residues) spans 967–978 (LDPKGQPREERN). Positions 1003-1013 (VQQSHSQTVKV) are enriched in polar residues.

The chain is Coiled-coil domain-containing protein 73 (Ccdc73) from Mus musculus (Mouse).